A 37-amino-acid polypeptide reads, in one-letter code: Esculentin-2Rb (37 aa).

The cysteines at positions 31 and 37 are disulfide-linked.

As to expression, expressed by the skin glands.

The protein localises to the secreted. Its function is as follows. Antimicrobial peptide. This chain is Esculentin-2Rb, found in Pelophylax ridibundus (Marsh frog).